The following is a 588-amino-acid chain: uncharacterized protein (588 aa).

An N-terminal signal peptide occupies residues 1 to 19 (MRSTAYLTALLSFLGATHA). N-linked (GlcNAc...) asparagine glycans are attached at residues Asn45 and Asn104. In terms of domain architecture, FAD-binding PCMH-type spans 118 to 303 (GQGRIPLYSA…TSVTLRTFKD (186 aa)). A Pros-8alpha-FAD histidine modification is found at His156. N-linked (GlcNAc...) asparagine glycosylation is found at Asn179, Asn312, Asn320, Asn351, Asn370, and Asn446.

It belongs to the oxygen-dependent FAD-linked oxidoreductase family. Requires FAD as cofactor.

Its subcellular location is the secreted. This is an uncharacterized protein from Arthroderma benhamiae (strain ATCC MYA-4681 / CBS 112371) (Trichophyton mentagrophytes).